The following is a 247-amino-acid chain: 14-3-3-like protein B (247 aa).

The protein belongs to the 14-3-3 family.

The polypeptide is 14-3-3-like protein B (GF14B) (Glycine max (Soybean)).